We begin with the raw amino-acid sequence, 320 residues long: MIKKIGVLTSGGDAPGMNAAIRGVVRTALSERLEVFGIYDGYLGLYENRMVQLDRYSVSDMINRGGTFLGSARFASFYQDKIRSIAVQNIKKRKIDALVVIGGDGSYIGAQKLTEMGIPCISIPGTIDNDVSGTDYTIGYFTALQTVVEAIDRLRDTSSSHQRISIVEVMGRHCGDLTLAAAIAGGCEFIVLPEIDYKKEDLVIEIQAGIAKGKKHAIVAITEYICDVEELAQYIEKKTNRETRATILGHIQRGGAPVVYDRILASRMGAYSVELLIKGYQGKCVGIQNEKMVFNDIKNALKNMKRTFKKDWLITAKKLY.

Gly12 is an ATP binding site. ADP is bound by residues 22–26 (RGVVR) and 55–60 (RYSVSD). Residues 73 to 74 (RF) and 103 to 106 (GDGS) contribute to the ATP site. Asp104 lines the Mg(2+) pocket. A substrate-binding site is contributed by 126 to 128 (TID). Asp128 serves as the catalytic Proton acceptor. Arg155 serves as a coordination point for ADP. Substrate-binding positions include Arg163 and 170–172 (MGR). ADP contacts are provided by residues 186-188 (GCE), Lys212, and 214-216 (KKH). Substrate is bound by residues Glu223, Arg244, and 250–253 (HIQR).

Belongs to the phosphofructokinase type A (PFKA) family. ATP-dependent PFK group I subfamily. Prokaryotic clade 'B1' sub-subfamily. Homotetramer. Mg(2+) is required as a cofactor.

It localises to the cytoplasm. It catalyses the reaction beta-D-fructose 6-phosphate + ATP = beta-D-fructose 1,6-bisphosphate + ADP + H(+). It participates in carbohydrate degradation; glycolysis; D-glyceraldehyde 3-phosphate and glycerone phosphate from D-glucose: step 3/4. With respect to regulation, allosterically activated by ADP and other diphosphonucleosides, and allosterically inhibited by phosphoenolpyruvate. Catalyzes the phosphorylation of D-fructose 6-phosphate to fructose 1,6-bisphosphate by ATP, the first committing step of glycolysis. The protein is ATP-dependent 6-phosphofructokinase of Buchnera aphidicola subsp. Acyrthosiphon pisum (strain 5A).